The following is a 267-amino-acid chain: Ribosomal RNA small subunit methyltransferase A (267 aa).

Positions 18, 20, 45, 66, 91, and 112 each coordinate S-adenosyl-L-methionine.

This sequence belongs to the class I-like SAM-binding methyltransferase superfamily. rRNA adenine N(6)-methyltransferase family. RsmA subfamily.

The protein resides in the cytoplasm. The enzyme catalyses adenosine(1518)/adenosine(1519) in 16S rRNA + 4 S-adenosyl-L-methionine = N(6)-dimethyladenosine(1518)/N(6)-dimethyladenosine(1519) in 16S rRNA + 4 S-adenosyl-L-homocysteine + 4 H(+). Functionally, specifically dimethylates two adjacent adenosines (A1518 and A1519) in the loop of a conserved hairpin near the 3'-end of 16S rRNA in the 30S particle. May play a critical role in biogenesis of 30S subunits. The sequence is that of Ribosomal RNA small subunit methyltransferase A from Shewanella sediminis (strain HAW-EB3).